The sequence spans 500 residues: Glycerol kinase (500 aa).

T12 lines the ADP pocket. Residues T12, T13, and S14 each contribute to the ATP site. T12 lines the sn-glycerol 3-phosphate pocket. Residue R16 coordinates ADP. 4 residues coordinate sn-glycerol 3-phosphate: R82, E83, Y134, and D246. R82, E83, Y134, D246, and Q247 together coordinate glycerol. Positions 268 and 312 each coordinate ADP. Residues T268, G312, Q316, and G413 each coordinate ATP. ADP is bound by residues G413 and N417.

Belongs to the FGGY kinase family.

It catalyses the reaction glycerol + ATP = sn-glycerol 3-phosphate + ADP + H(+). It functions in the pathway polyol metabolism; glycerol degradation via glycerol kinase pathway; sn-glycerol 3-phosphate from glycerol: step 1/1. Its activity is regulated as follows. Inhibited by fructose 1,6-bisphosphate (FBP). Its function is as follows. Key enzyme in the regulation of glycerol uptake and metabolism. Catalyzes the phosphorylation of glycerol to yield sn-glycerol 3-phosphate. The chain is Glycerol kinase from Saccharopolyspora erythraea (strain ATCC 11635 / DSM 40517 / JCM 4748 / NBRC 13426 / NCIMB 8594 / NRRL 2338).